A 223-amino-acid polypeptide reads, in one-letter code: Cytidylate kinase (223 aa).

10-18 (GPASSGKST) provides a ligand contact to ATP.

This sequence belongs to the cytidylate kinase family. Type 1 subfamily.

Its subcellular location is the cytoplasm. It carries out the reaction CMP + ATP = CDP + ADP. The enzyme catalyses dCMP + ATP = dCDP + ADP. This Streptococcus pneumoniae (strain Hungary19A-6) protein is Cytidylate kinase.